The chain runs to 354 residues: MSIHIQQVNKHFGNFVAVDSVNLEIKTGELTALLGPSGSGKTTLLRIIAGLEQADSGIVKFNGEDITTQHVSERGVGFVFQHYALFKHMTVFENVAYGLTVRPRKTRPSKAEIAEKVHSLLKLVQLDWTADRYPSQLSGGQRQRIALARALAVEPKVLLLDEPFGALDAKVRAELRRWLRRLHDEINVTTVFVTHDQEEALEVADKIVVMNKGRIEQQGTPEEVYDTPSNPFVYEFLGNVNLFHARVKHGHSTIGNIHIPSPEHAGGEEQQGLAYVRPHEIEVLTQPTENAIKVNLDLVTIVGPVARLEVLTEIDEQLIHVELSKVQFKQLGISKGDNAWIQPRYSKVFLGEGI.

The region spanning 3–237 (IHIQQVNKHF…PSNPFVYEFL (235 aa)) is the ABC transporter domain. 35–42 (GPSGSGKT) lines the ATP pocket.

This sequence belongs to the ABC transporter superfamily. Sulfate/tungstate importer (TC 3.A.1.6) family. As to quaternary structure, the complex is composed of two ATP-binding proteins (CysA), two transmembrane proteins (CysT and CysW) and a solute-binding protein (CysP).

Its subcellular location is the cell inner membrane. The enzyme catalyses sulfate(out) + ATP + H2O = sulfate(in) + ADP + phosphate + H(+). It carries out the reaction thiosulfate(out) + ATP + H2O = thiosulfate(in) + ADP + phosphate + H(+). In terms of biological role, part of the ABC transporter complex CysAWTP involved in sulfate/thiosulfate import. Responsible for energy coupling to the transport system. The protein is Sulfate/thiosulfate import ATP-binding protein CysA 2 of Shewanella oneidensis (strain ATCC 700550 / JCM 31522 / CIP 106686 / LMG 19005 / NCIMB 14063 / MR-1).